A 339-amino-acid chain; its full sequence is DNA-directed RNA polymerase subunit alpha (339 aa).

Residues 1-233 are alpha N-terminal domain (alpha-NTD); it reads MVREEVAGST…DLFLPFLHAE (233 aa). An alpha C-terminal domain (alpha-CTD) region spans residues 266–339; the sequence is GIPLNCIFID…IDLLKNKLSF (74 aa).

The protein belongs to the RNA polymerase alpha chain family. In plastids the minimal PEP RNA polymerase catalytic core is composed of four subunits: alpha, beta, beta', and beta''. When a (nuclear-encoded) sigma factor is associated with the core the holoenzyme is formed, which can initiate transcription.

Its subcellular location is the plastid. It is found in the chloroplast. The catalysed reaction is RNA(n) + a ribonucleoside 5'-triphosphate = RNA(n+1) + diphosphate. Functionally, DNA-dependent RNA polymerase catalyzes the transcription of DNA into RNA using the four ribonucleoside triphosphates as substrates. In Elymus canadensis (Canada wild rye), this protein is DNA-directed RNA polymerase subunit alpha.